The sequence spans 177 residues: Probable phospholipid hydroperoxide glutathione peroxidase (177 aa).

Cysteine 42 is an active-site residue.

This sequence belongs to the glutathione peroxidase family.

The protein resides in the cytoplasm. It catalyses the reaction a hydroperoxy polyunsaturated fatty acid + 2 glutathione = a hydroxy polyunsaturated fatty acid + glutathione disulfide + H2O. In terms of biological role, protects cells and enzymes from oxidative damage, by catalyzing the reduction of hydrogen peroxide, lipid peroxides and organic hydroperoxide, by glutathione. The protein is Probable phospholipid hydroperoxide glutathione peroxidase of Encephalitozoon cuniculi (strain GB-M1) (Microsporidian parasite).